A 216-amino-acid chain; its full sequence is Small ribosomal subunit protein uS5 (216 aa).

An S5 DRBM domain is found at 51–114 (LEEEVIDVNL…DDAKFNIIKV (64 aa)).

It belongs to the universal ribosomal protein uS5 family. Part of the 30S ribosomal subunit. Contacts protein S4.

Functionally, with S4 and S12 plays an important role in translational accuracy. In Methanothermobacter thermautotrophicus (strain ATCC 29096 / DSM 1053 / JCM 10044 / NBRC 100330 / Delta H) (Methanobacterium thermoautotrophicum), this protein is Small ribosomal subunit protein uS5.